We begin with the raw amino-acid sequence, 490 residues long: Interferon-induced protein with tetratricopeptide repeats 3 (490 aa).

TPR repeat units follow at residues 51–84 (ATMYNLLAYIKHLDGNNEAALECLRQAEELIQQE), 94–127 (LVTWGNYVWVYYHLGRLSDAQIYVDKVKQTCKKF), 136–169 (SELDCEEGWTQLKCGRNERAKVCFEKALEEKPNN), 172–206 (FSSGLAIAMYHLDNNPEKQFSTDVLKQAIELSPDN), 207–240 (QYVKVLLGLKLQKMNKEAEGEQFVEEALEKAPCQ), and 241–274 (TDVLRSAAKFYRRKGDLDKAIELFQRVLESTPNN). Position 203 is a phosphoserine (S203). The disordered stretch occupies residues 386 to 409 (LSISKKSTDKEEIKDQPQNVSENL). Positions 391-400 (KSTDKEEIKD) are enriched in basic and acidic residues. TPR repeat units lie at residues 415–448 (PNYWYLQGLIHKQNGDLLQAAKCYEKELGRLLRD) and 450–481 (PSGIGSIFLSASELEDGSEEMGQGAVSSSPRE). The tract at residues 467–490 (SEEMGQGAVSSSPRELLSNSEQLN) is disordered. Polar residues predominate over residues 474–490 (AVSSSPRELLSNSEQLN). S478 carries the post-translational modification Phosphoserine.

This sequence belongs to the IFIT family. As to quaternary structure, component of an interferon-dependent multiprotein complex, at least composed of IFIT1, IFIT2 and IFIT3. Interacts with IFIT1 and IFIT2. Interacts (via N-terminus) with MAVS, TBK1, TRAF6 and RIGI. Interacts with COPS5.

It localises to the cytoplasm. Its subcellular location is the mitochondrion. In terms of biological role, IFN-induced antiviral protein which acts as an inhibitor of cellular as well as viral processes, cell migration, proliferation, signaling, and viral replication. Enhances MAVS-mediated host antiviral responses by serving as an adapter bridging TBK1 to MAVS which leads to the activation of TBK1 and phosphorylation of IRF3 and phosphorylated IRF3 translocates into nucleus to promote antiviral gene transcription. Exhibits an antiproliferative activity via the up-regulation of cell cycle negative regulators CDKN1A/p21 and CDKN1B/p27. Normally, CDKN1B/p27 turnover is regulated by COPS5, which binds CDKN1B/p27 in the nucleus and exports it to the cytoplasm for ubiquitin-dependent degradation. IFIT3 sequesters COPS5 in the cytoplasm, thereby increasing nuclear CDKN1B/p27 protein levels. Up-regulates CDKN1A/p21 by down-regulating MYC, a repressor of CDKN1A/p21. Can negatively regulate the apoptotic effects of IFIT2. The chain is Interferon-induced protein with tetratricopeptide repeats 3 (IFIT3) from Pan troglodytes (Chimpanzee).